Reading from the N-terminus, the 1058-residue chain is DNA primase (1058 aa).

The segment at 988 to 1028 (CLRFKHGRASRATARTFVALSVGANNRLCVSLCQQCFAAKC) adopts a CHC2-type zinc-finger fold.

This sequence belongs to the herpesviridae DNA primase family. Associates with the helicase and the primase-associated factor to form the helicase-primase factor.

The protein localises to the host nucleus. Functionally, essential component of the helicase/primase complex. Unwinds the DNA at the replication forks and generates single-stranded DNA for both leading and lagging strand synthesis. The primase initiates primer synthesis and thereby produces large amount of short RNA primers on the lagging strand that the polymerase elongates using dNTPs. The sequence is that of DNA primase from Homo sapiens (Human).